A 406-amino-acid chain; its full sequence is Elongation factor Tu-A (406 aa).

Positions 10-215 (KPHVNVGTIG…AIDEYIPTPV (206 aa)) constitute a tr-type G domain. The segment at 19–26 (GHVDHGKT) is G1. GTP is bound at residue 19 to 26 (GHVDHGKT). Thr26 is a Mg(2+) binding site. Positions 61-65 (GITIN) are G2. The interval 82–85 (DCPG) is G3. Residues 82–86 (DCPGH) and 137–140 (NKVD) each bind GTP. A G4 region spans residues 137 to 140 (NKVD). The tract at residues 175 to 177 (SAL) is G5. Position 395 is a phosphothreonine (Thr395).

The protein belongs to the TRAFAC class translation factor GTPase superfamily. Classic translation factor GTPase family. EF-Tu/EF-1A subfamily. As to quaternary structure, monomer. Binds to the 70S ribosome, contacts tmRNA during trans-translation. Phosphorylated on a threonine.

It localises to the cytoplasm. The enzyme catalyses GTP + H2O = GDP + phosphate + H(+). Its function is as follows. GTP hydrolase that promotes the GTP-dependent binding of aminoacyl-tRNA to the A-site of ribosomes during protein biosynthesis. Functionally, EF-Tu-GDP binds to the acceptor arm of tmRNA by interacting with its acceptor arm, suggesting that GTP hydrolysis by EF-Tu is essential for tmRNA function. In terms of biological role, protects glycyl-tRNA(Gly) from hydrolysis by E.coli D-aminoacyl-tRNA deacylase (dtd). The polypeptide is Elongation factor Tu-A (Thermus thermophilus (strain ATCC 27634 / DSM 579 / HB8)).